Reading from the N-terminus, the 137-residue chain is Large ribosomal subunit protein bL12 (137 aa).

The protein belongs to the bacterial ribosomal protein bL12 family. As to quaternary structure, homodimer. Part of the ribosomal stalk of the 50S ribosomal subunit. Forms a multimeric L10(L12)X complex, where L10 forms an elongated spine to which 2 to 4 L12 dimers bind in a sequential fashion. Binds GTP-bound translation factors.

Functionally, forms part of the ribosomal stalk which helps the ribosome interact with GTP-bound translation factors. Is thus essential for accurate translation. This chain is Large ribosomal subunit protein bL12, found in Synechococcus sp. (strain JA-3-3Ab) (Cyanobacteria bacterium Yellowstone A-Prime).